Reading from the N-terminus, the 413-residue chain is Azaphilone biosynthesis cluster protein M (413 aa).

Residues 123 to 138 (STQPDQVQPNQPTPSF) are compositionally biased toward polar residues. The tract at residues 123–145 (STQPDQVQPNQPTPSFESAAGAS) is disordered.

The protein operates within secondary metabolite biosynthesis. In terms of biological role, part of the gene cluster that mediates the biosynthesis of azaterrilone A and other azaphilones, a class of fungal metabolites characterized by a highly oxygenated pyrano-quinone bicyclic core and exhibiting a broad range of bioactivities. The first step of the pathway begins with the non-reducing polyketide synthase tazA that assembles one acetyl-CoA starter unit, five malonyl-CoA units, and catalyzes a series of Claisen condensations, methylation, PT-mediated cyclization, and finally releases the first hexaketide precursor through the R-domain. The tazA product then undergoes reduction on its terminal ketone and the following pyran-ring formation by yet undetermined enzyme(s). Dehydration and enoyl reduction, possibly involving the trans-enoyl reductase tazE leads to the next intermediate. TazD is predicted as an acetyltransferase and might catalyze the acetylation steps leading to the synthesis of azaterrilone A. Azaterrilone A is not the final product of the taz pathway and both the highly reducing polyketide synthase tazB and the dual enzyme tazHJ catalyze late steps of the pathway, leading to the production of the 2 final stereoisomers that contain additional polyketide modification whose structures have still to be determined. The protein is Azaphilone biosynthesis cluster protein M of Aspergillus terreus (strain NIH 2624 / FGSC A1156).